The primary structure comprises 163 residues: uncharacterized protein (163 aa).

This is an uncharacterized protein from Homo sapiens (Human).